Reading from the N-terminus, the 237-residue chain is Phosphoribosylaminoimidazole-succinocarboxamide synthase (237 aa).

Belongs to the SAICAR synthetase family.

The enzyme catalyses 5-amino-1-(5-phospho-D-ribosyl)imidazole-4-carboxylate + L-aspartate + ATP = (2S)-2-[5-amino-1-(5-phospho-beta-D-ribosyl)imidazole-4-carboxamido]succinate + ADP + phosphate + 2 H(+). It participates in purine metabolism; IMP biosynthesis via de novo pathway; 5-amino-1-(5-phospho-D-ribosyl)imidazole-4-carboxamide from 5-amino-1-(5-phospho-D-ribosyl)imidazole-4-carboxylate: step 1/2. In Yersinia pseudotuberculosis serotype O:1b (strain IP 31758), this protein is Phosphoribosylaminoimidazole-succinocarboxamide synthase.